We begin with the raw amino-acid sequence, 512 residues long: Protein male-specific lethal-3 (512 aa).

Residues 11–90 (FHKGEIVLCY…QLQRELAEAA (80 aa)) enclose the Chromo domain. Residues 98 to 175 (YSYKGTPDKP…DGRLKGNRGR (78 aa)) form a disordered region. Basic and acidic residues predominate over residues 149-169 (RTRDNSGGKRKEKPPSGDGRL). One can recognise an MRG domain in the interval 196–500 (QEDRIMMRVS…STALPQEDLQ (305 aa)).

In terms of assembly, component of the male-specific lethal (MSL) histone acetyltransferase complex, composed of mof, mle, msl-1, msl-2 and msl-3 proteins, as well as roX1 and roX2 non-coding RNAs. Component of a maternal MSL subcomplex composed of mof, msl-1 and msl-3. In terms of processing, ubiquitinated by msl-2.

The protein resides in the nucleus. The protein localises to the chromosome. In terms of biological role, component of the male-specific lethal (MSL) histone acetyltransferase complex, a multiprotein complex essential for elevating transcription of the single X chromosome in the male (X chromosome dosage compensation). The MSL complex specifically associates with the single X chromosome in males and mediates formation of H4K16ac, promoting a two-fold activation of X chromosome. Acts as a histone reader that specifically recognizes and binds histone H3 trimethylated at 'Lys-36' (H3K36me3) and histone H4 monomethylated at 'Lys-20' (H4K20me1). Within the MSL complex, mediates the spreading of the MSL complex from initiation sites on the male X chromosome to flanking chromatin. Following initial recruitment of the MSL complex to male X chromosome by msl-2, msl-3 binds H3K36me3 and promotes spreading of the MSL complex in cis. In addition to its role in dosage compensation in males, promotes germline stem cell differentiation in females: recognizes and binds H3K36me3, promoting recruitment of the ATAC complex and transcription of genes, such as RpS19b. This Drosophila melanogaster (Fruit fly) protein is Protein male-specific lethal-3.